The following is a 246-amino-acid chain: Neuromodulin (246 aa).

Residues 1–246 (MLCCMRRTKQ…EESKADQENA (246 aa)) are disordered. S-palmitoyl cysteine attachment occurs at residues C3 and C4. Over residues 9-33 (KQVEKNEDGDQKIEQDGIKPEDKAH) the composition is skewed to basic and acidic residues. Positions 32-61 (AHKAATKIQASFRGHITRKKLKGEKKADAP) constitute an IQ domain. Composition is skewed to low complexity over residues 87-99 (ASAATEASAADSA) and 125-157 (SEQPAPQAATPAASSEEKPAAAAETESATKAST). Basic and acidic residues predominate over residues 164 to 176 (KADEAQDKEEPKQ). Positions 177 to 203 (ADVPAADTTATTTPAAEDATAKATAQP) are enriched in low complexity. 2 stretches are compositionally biased toward basic and acidic residues: residues 213 to 225 (TEEKTDAVEETKP) and 237 to 246 (EESKADQENA).

The protein belongs to the neuromodulin family. As to quaternary structure, binds calmodulin with a greater affinity in the absence of Ca(2+) than in its presence. Palmitoylated. Palmitoylation is essential for plasma membrane association. In terms of tissue distribution, expressed in neurons.

Its subcellular location is the cell membrane. It is found in the cell projection. The protein localises to the growth cone membrane. The protein resides in the synapse. It localises to the filopodium membrane. Functionally, this protein is associated with nerve growth. It is a major component of the motile 'growth cones' that form the tips of elongating axons. Plays a role in axonal and dendritic filopodia induction. This Gallus gallus (Chicken) protein is Neuromodulin (GAP43).